A 473-amino-acid polypeptide reads, in one-letter code: H(+)/Cl(-) exchange transporter ClcA (473 aa).

The Cytoplasmic portion of the chain corresponds to 1–32 (MKTDTPSLETPQAARLRRRQLIRQLLERDKTP). A helical membrane pass occupies residues 33-69 (LAILFMAAVVGTLVGLAAVAFDKGVAWLQNQRMGALV). Residues 70–76 (HTADNYP) lie on the Periplasmic side of the membrane. A helical membrane pass occupies residues 77 to 100 (LLLTVAFLCSAVLAMFGYFLVRKY). A Selectivity filter part_1 motif is present at residues 106–110 (GSGIP). Serine 107 serves as a coordination point for chloride. An intramembrane region (helical) is located at residues 109–116 (IPEIEGAL). At 117–123 (EDQRPVR) the chain is on the cytoplasmic side. The next 2 membrane-spanning stretches (helical) occupy residues 124–141 (WWRV…TLGG) and 148–166 (EGPT…LDIF). The Selectivity filter part_2 signature appears at 146-150 (GREGP). Topologically, residues 167–176 (RLKGDEARHT) are cytoplasmic. 2 intramembrane regions (helical) span residues 177 to 189 (LLAT…LAAA) and 193 to 201 (PLAGILFII). At 202–214 (EEMRPQFRYTLIS) the chain is on the cytoplasmic side. The chain crosses the membrane as a helical span at residues 215–232 (IKAVFIGVIMSTIMYRIF). Residues 233–252 (NHEVALIDVGKLSDAPLNTL) are Periplasmic-facing. Residues 253–281 (WLYLILGIIFGIFGPIFNKWVLGMQDLLH) form a helical membrane-spanning segment. Topologically, residues 282 to 287 (RVHGGN) are cytoplasmic. A helical transmembrane segment spans residues 288–309 (ITKWVLMGGAIGGLCGLLGFVA). At 310–329 (PATSGGGFNLIPIATAGNFS) the chain is on the periplasmic side. The next 2 helical transmembrane spans lie at 330–349 (MGML…LCFS) and 355–376 (GIFA…MVAV). The Selectivity filter part_3 signature appears at 355-359 (GIFAP). The chloride site is built by isoleucine 356 and phenylalanine 357. Residues 377-386 (ELFPQYHLEA) are Periplasmic-facing. Residues 387-401 (GTFAIAGMGALLAAS) constitute an intramembrane region (helical). Positions 402–404 (IRA) form an intramembrane region, note=Loop between two helices. Positions 405–416 (PLTGIILVLEMT) form an intramembrane region, helical. Residues 417–421 (DNYQL) constitute an intramembrane region (note=Loop between two helices). The helical transmembrane segment at 422–438 (ILPMIITGLGATLLAQF) threads the bilayer. Residues 439–473 (TGGKPLYSAILARTLAKQEAEQLARSKAASASENT) are Cytoplasmic-facing. Tyrosine 445 contributes to the chloride binding site.

It belongs to the chloride channel (TC 2.A.49) family. ClcA subfamily. Homodimer.

The protein localises to the cell inner membrane. The enzyme catalyses 2 chloride(in) + H(+)(out) = 2 chloride(out) + H(+)(in). Its function is as follows. Proton-coupled chloride transporter. Functions as antiport system and exchanges two chloride ions for 1 proton. Probably acts as an electrical shunt for an outwardly-directed proton pump that is linked to amino acid decarboxylation, as part of the extreme acid resistance (XAR) response. This chain is H(+)/Cl(-) exchange transporter ClcA, found in Shigella flexneri serotype 5b (strain 8401).